A 262-amino-acid polypeptide reads, in one-letter code: UPF0739 protein C1orf74 homolog (262 aa).

Belongs to the UPF0739 family.

This is UPF0739 protein C1orf74 homolog from Xenopus laevis (African clawed frog).